A 494-amino-acid polypeptide reads, in one-letter code: BTB/POZ domain and ankyrin repeat-containing protein NH5.1 (494 aa).

The BTB domain maps to 25 to 130 (SDVAFSVEGR…LYSGQASVAA (106 aa)). The tract at residues 60 to 94 (NHQPPPPPPPLNWPMAGGGGGGSGGGGRGGAGGGG) is disordered. Residues 61-71 (HQPPPPPPPLN) show a composition bias toward pro residues. Residues 75–94 (AGGGGGGSGGGGRGGAGGGG) show a composition bias toward gly residues. The segment at 136 to 150 (LPGCGARGCWHTRCG) adopts a C2HC NPR-type zinc-finger fold. The Zn(2+) site is built by C139, C144, H146, and C149. ANK repeat units lie at residues 274–302 (NKIRRMRRALDAADIELVKLMVMGEGLDL), 303–333 (DDALAVHYAVQHCNRDVVKALLELGAADVNS), 338–367 (TGKTALHLAAEMVSPDMVSVLLDHHADPNS), and 371–405 (DGVTPLDVLRSLTSEFLFKGAVPGLTHIEPNKLRL). Disordered regions lie at residues 421–443 (DGAPVTGGAEAGGSDGGNFPRSD) and 469–494 (AAGEGRKSNNGRGSPPPAMYFPNGFA).

Belongs to the plant 'ANKYRIN-BTB/POZ' family. 'NOOT-BOP-COCH-like' (NBCL) subfamily. Homodimer. Interacts with TGAL5, TGAL7, TGAL8 and TGAL9.

The protein resides in the nucleus. It localises to the cytoplasm. Its pathway is protein modification; protein ubiquitination. Functionally, may act as a substrate-specific adapter of an E3 ubiquitin-protein ligase complex (CUL3-RBX1-BTB) which mediates the ubiquitination and subsequent proteasomal degradation of target proteins. Transcriptional co-regulator involved in the promotion of leaf and floral meristem fate and determinacy. Required for the abscission of senescent organs, probably by regulating the cell wall disorganization in abscission zones (AZs, e.g. pulvini at the base of leaves). This Oryza sativa subsp. japonica (Rice) protein is BTB/POZ domain and ankyrin repeat-containing protein NH5.1.